Here is a 397-residue protein sequence, read N- to C-terminus: Chorismate synthase (397 aa).

The NADP(+) site is built by Arg40 and Arg46. FMN contacts are provided by residues Arg129–Ser131, Gln257–Ala258, Gly302, Lys317–Thr321, and Arg343.

It belongs to the chorismate synthase family. As to quaternary structure, homotetramer. It depends on FMNH2 as a cofactor.

It carries out the reaction 5-O-(1-carboxyvinyl)-3-phosphoshikimate = chorismate + phosphate. It participates in metabolic intermediate biosynthesis; chorismate biosynthesis; chorismate from D-erythrose 4-phosphate and phosphoenolpyruvate: step 7/7. Functionally, catalyzes the anti-1,4-elimination of the C-3 phosphate and the C-6 proR hydrogen from 5-enolpyruvylshikimate-3-phosphate (EPSP) to yield chorismate, which is the branch point compound that serves as the starting substrate for the three terminal pathways of aromatic amino acid biosynthesis. This reaction introduces a second double bond into the aromatic ring system. The chain is Chorismate synthase from Prosthecochloris aestuarii (strain DSM 271 / SK 413).